The following is a 152-amino-acid chain: UPF0735 ACT domain-containing protein CTC_00116 (152 aa).

The ACT domain occupies 76 to 151 (IISVTLNHRP…NVIKLDLIAM (76 aa)).

The protein belongs to the UPF0735 family.

The chain is UPF0735 ACT domain-containing protein CTC_00116 from Clostridium tetani (strain Massachusetts / E88).